Reading from the N-terminus, the 688-residue chain is Phosphatidylinositol 4-phosphate 5-kinase type-1 gamma (688 aa).

Positions 48–71 are disordered; the sequence is GQPGPGHGKKLGHRGVDASGETTY. Residues 75-443 form the PIPK domain; that stretch reads TSSTLKGAIQ…RFFKFMSSTV (369 aa). N6-acetyllysine is present on residues K265 and K268. R459 carries the post-translational modification Asymmetric dimethylarginine; alternate. Position 459 is an omega-N-methylarginine; alternate (R459). The segment covering 525–534 has biased composition (low complexity); sequence TTLSSTSLSI. Disordered regions lie at residues 525-565 and 592-629; these read TTLS…QEEL and GAGVEVPPSGASAAATVEVDAASQASEPASQASDEEDA. S554 carries the phosphoserine modification. Positions 602–623 are enriched in low complexity; it reads ASAAATVEVDAASQASEPASQA. Y635 carries the phosphotyrosine; by EGFR modification. At Y671 the chain carries Phosphotyrosine; by CSK. Residue S672 is modified to Phosphoserine; by CDK5, MAPK1 and CDK1. Residues S682 and S686 each carry the phosphoserine modification. T688 carries the post-translational modification Phosphothreonine.

Interacts with TLN1. Interacts with TLN2; interaction stimulates 1-phosphatidylinositol-4-phosphate 5-kinase activity. May compete with beta-integrins for the same binding site on TLN1 and TLN2. Interacts with ARF6; interaction stimulates 1-phosphatidylinositol-4-phosphate 5-kinase activity. Interacts with AP2B1. Interacts with AP2M1; phosphorylation of PIP5K1C by CSK disrupts the interaction; clathrin competes with PIP5K1C. Interacts with CDH1. Interacts with CSK. Interacts with PLCG1; interaction is abolished upon EGF stimulation. Interacts with LAPTM4B; promotes SNX5 association with LAPTM4B; kinase activity of PIP5K1C is required; interaction is regulated by phosphatidylinositol 4,5-bisphosphate generated by PIP5K1C. In terms of processing, phosphorylation on Ser-672 negatively regulates binding to TLN2 and is strongly stimulated in mitosis. Phosphorylation on Tyr-671 is necessary for targeting to focal adhesions. Phosphorylation on Ser-672 and Tyr-671 are mutually exclusive. Phosphorylated by SYK and CSK. Tyrosine phosphorylation is enhanced by PTK2 signaling. Phosphorylated at Tyr-635 upon EGF stimulation. Some studies suggest that phosphorylation on Tyr-671 enhances binding to tailins (TLN1 and TLN2); others that phosphorylation at Tyr-671 does not directly enhance binding to tailins (TLN1 and TLN2) but may act indirectly by inhibiting phosphorylation at Ser-672. Acetylation at Lys-265 and Lys-268 seems to decrease lipid kinase activity. Deacetylation of these sites by SIRT1 positively regulates the exocytosis of TSH-containing granules from pituitary cells.

It is found in the cell membrane. Its subcellular location is the endomembrane system. It localises to the cytoplasm. The protein localises to the cell junction. The protein resides in the focal adhesion. It is found in the adherens junction. Its subcellular location is the cell projection. It localises to the ruffle membrane. The protein localises to the phagocytic cup. The protein resides in the uropodium. It carries out the reaction a 1,2-diacyl-sn-glycero-3-phospho-(1D-myo-inositol 4-phosphate) + ATP = a 1,2-diacyl-sn-glycero-3-phospho-(1D-myo-inositol-4,5-bisphosphate) + ADP + H(+). It catalyses the reaction 1-octadecanoyl-2-(5Z,8Z,11Z,14Z)-eicosatetraenoyl-sn-glycero-3-phospho-1D-myo-inositol 4-phosphate + ATP = 1-octadecanoyl-2-(5Z,8Z,11Z,14Z)-eicosatetraenoyl-sn-glycero-3-phospho-1D-myo-inositol 4,5-bisphosphate + ADP + H(+). The enzyme catalyses 1-octadecanoyl-2-(9Z)-octadecenoyl-sn-glycero-3-phospho-1D-myo-inositol 4-phosphate + ATP = 1-octadecanoyl-2-(9Z)-octadecenoyl-sn-glycero-3-phospho-1D-myo-inositol 4,5-bisphosphate + ADP + H(+). The catalysed reaction is 1-octadecanoyl-2-(9Z)-octadecenoyl-sn-glycero-3-phospho-1D-myo-inositol + ATP = 1-octadecanoyl-2-(9Z)-octadecenoyl-sn-glycero-3-phospho-1D-myo-inositol 5-phosphate + ADP + H(+). It carries out the reaction 1-octadecanoyl-2-(9Z,12Z)-octadecadienoyl-sn-glycero-3-phospho-1D-myo-inositol + ATP = 1-octadecanoyl-2-(9Z,12Z)-octadecadienoyl-sn-glycero-3-phospho-1D-myo-inositol 5-phosphate + ADP + H(+). It catalyses the reaction 1-octadecanoyl-2-(5Z,8Z,11Z,14Z-eicosatetraenoyl)-sn-glycero-3-phospho-(1D-myo-inositol) + ATP = 1-octadecanoyl-2-(5Z,8Z,11Z,14Z)-eicosatetraenoyl-sn-glycero-3-phospho-1D-myo-inositol 5-phosphate + ADP + H(+). The enzyme catalyses 1,2-di-(9Z,12Z)-octadecadienoyl-sn-glycero-3-phospho-1D-myo-inositol + ATP = 1,2-di(9Z,12Z)-octadecadienoyl-sn-glycero-3-phospho-1D-myo-inositol 5-phosphate + ADP + H(+). In terms of biological role, catalyzes the phosphorylation of phosphatidylinositol 4-phosphate (PtdIns(4)P/PI4P) to form phosphatidylinositol 4,5-bisphosphate (PtdIns(4,5)P2/PIP2), a lipid second messenger that regulates several cellular processes such as signal transduction, vesicle trafficking, actin cytoskeleton dynamics, cell adhesion, and cell motility. PtdIns(4,5)P2 can directly act as a second messenger or can be utilized as a precursor to generate other second messengers: inositol 1,4,5-trisphosphate (IP3), diacylglycerol (DAG) or phosphatidylinositol-3,4,5-trisphosphate (PtdIns(3,4,5)P3/PIP3). PIP5K1A-mediated phosphorylation of PtdIns(4)P is the predominant pathway for PtdIns(4,5)P2 synthesis. Together with PIP5K1A, is required for phagocytosis, both enzymes regulating different types of actin remodeling at sequential steps. Promotes particle attachment by generating the pool of PtdIns(4,5)P2 that induces controlled actin depolymerization to facilitate Fc-gamma-R clustering. Mediates RAC1-dependent reorganization of actin filaments. Required for synaptic vesicle transport. Controls the plasma membrane pool of PtdIns(4,5)P2 implicated in synaptic vesicle endocytosis and exocytosis. Plays a role in endocytosis mediated by clathrin and AP-2 (adaptor protein complex 2). Required for clathrin-coated pits assembly at the synapse. Participates in cell junction assembly. Modulates adherens junctions formation by facilitating CDH1/cadherin trafficking. Required for focal adhesion dynamics. Modulates the targeting of talins (TLN1 and TLN2) to the plasma membrane and their efficient assembly into focal adhesions. Regulates the interaction between talins (TLN1 and TLN2) and beta-integrins. Required for uropodium formation and retraction of the cell rear during directed migration. Has a role in growth factor-stimulated directional cell migration and adhesion. Required for talin assembly into nascent adhesions forming at the leading edge toward the direction of the growth factor. Negative regulator of T-cell activation and adhesion. Negatively regulates integrin alpha-L/beta-2 (LFA-1) polarization and adhesion induced by T-cell receptor. Together with PIP5K1A has a role during embryogenesis and together with PIP5K1B may have a role immediately after birth. This is Phosphatidylinositol 4-phosphate 5-kinase type-1 gamma from Rattus norvegicus (Rat).